Here is a 32-residue protein sequence, read N- to C-terminus: Tail virion protein G7P (32 aa).

Residues 8-28 (IIYVVFALGLVVSFGLGAITA) traverse the membrane as a helical segment.

It belongs to the inovirus G7P protein family.

Its subcellular location is the virion. It localises to the host membrane. Its function is as follows. May initiate with G9P the virion concomitant assembly-budding process, by interacting with the packaging signal of the viral genome. The assembly-budding takes place at the host inner membrane. In turn, G7P and G9P are present at the end of the filamentous virion that emerges first from the bacterial host. This is Tail virion protein G7P (VII) from Escherichia coli (Bacteriophage IKe).